Consider the following 141-residue polypeptide: Small ribosomal subunit protein uS12 (141 aa).

The protein belongs to the universal ribosomal protein uS12 family. In terms of assembly, part of the 30S ribosomal subunit.

Functionally, with S4 and S5 plays an important role in translational accuracy. Located at the interface of the 30S and 50S subunits. This chain is Small ribosomal subunit protein uS12, found in Methanothermobacter thermautotrophicus (strain ATCC 29096 / DSM 1053 / JCM 10044 / NBRC 100330 / Delta H) (Methanobacterium thermoautotrophicum).